The sequence spans 474 residues: 4-O-methyl-glucuronoyl methylesterase (474 aa).

The N-terminal stretch at methionine 1–alanine 17 is a signal peptide. One can recognise a CBM1 domain in the interval alanine 19–leucine 55. The tract at residues alanine 61 to serine 91 is disordered. A compositionally biased stretch (pro residues) spans alanine 68–threonine 84. N-linked (GlcNAc...) asparagine glycosylation is present at asparagine 120. The short motif at glycine 284 to glycine 289 is the GXSYXG catalytic site motif element. Intrachain disulfides connect cysteine 285-cysteine 421 and cysteine 317-cysteine 393. The active-site Nucleophile is serine 286. Positions 290, 332, 340, and 384 each coordinate substrate. Residue histidine 420 is the Proton donor/acceptor of the active site.

This sequence belongs to the carbohydrate esterase 15 (CE15) family. Post-translationally, N-glycosylated.

The protein resides in the secreted. It catalyses the reaction a 4-O-methyl-alpha-D-glucuronosyl ester derivative + H2O = 4-O-methyl-alpha-D-glucuronate derivative + an alcohol + H(+). Glucuronoyl esterase which may play a significant role in biomass degradation, as it is considered to disconnect hemicellulose from lignin through the hydrolysis of the ester bond between 4-O-methyl-D-glucuronic acid residues of glucuronoxylans and aromatic alcohols of lignin. In Cerrena unicolor (Canker rot fungus), this protein is 4-O-methyl-glucuronoyl methylesterase.